The primary structure comprises 374 residues: Chaperone protein DnaJ (374 aa).

Residues 5-70 (DFYEILGVSK…EKRSAYDRMG (66 aa)) enclose the J domain. Residues 133-211 (GCKKEISFTA…CHGNGVKDKS (79 aa)) form a CR-type zinc finger. 8 residues coordinate Zn(2+): cysteine 146, cysteine 149, cysteine 163, cysteine 166, cysteine 185, cysteine 188, cysteine 199, and cysteine 202. CXXCXGXG motif repeat units follow at residues 146–153 (CDTCDGKG), 163–170 (CQTCHGQG), 185–192 (CPHCGGTG), and 199–206 (CSDCHGNG).

This sequence belongs to the DnaJ family. As to quaternary structure, homodimer. Zn(2+) is required as a cofactor.

It localises to the cytoplasm. In terms of biological role, participates actively in the response to hyperosmotic and heat shock by preventing the aggregation of stress-denatured proteins and by disaggregating proteins, also in an autonomous, DnaK-independent fashion. Unfolded proteins bind initially to DnaJ; upon interaction with the DnaJ-bound protein, DnaK hydrolyzes its bound ATP, resulting in the formation of a stable complex. GrpE releases ADP from DnaK; ATP binding to DnaK triggers the release of the substrate protein, thus completing the reaction cycle. Several rounds of ATP-dependent interactions between DnaJ, DnaK and GrpE are required for fully efficient folding. Also involved, together with DnaK and GrpE, in the DNA replication of plasmids through activation of initiation proteins. The chain is Chaperone protein DnaJ from Psychrobacter arcticus (strain DSM 17307 / VKM B-2377 / 273-4).